We begin with the raw amino-acid sequence, 119 residues long: Protein Wnt-4 (119 aa).

Ser1 carries the O-palmitoleoyl serine; by PORCN lipid modification. Cystine bridges form between Cys69-Cys100 and Cys85-Cys95. An N-linked (GlcNAc...) asparagine glycan is attached at Asn86.

This sequence belongs to the Wnt family. Post-translationally, palmitoleoylation is required for efficient binding to frizzled receptors. Depalmitoleoylation leads to Wnt signaling pathway inhibition.

Its subcellular location is the secreted. The protein localises to the extracellular space. It is found in the extracellular matrix. Its function is as follows. Ligand for members of the frizzled family of seven transmembrane receptors. Plays an important role in embryonic development. This chain is Protein Wnt-4 (WNT-4), found in Plestiodon skiltonianus (Western skink).